The following is a 101-amino-acid chain: Long chronological lifespan protein 1 (101 aa).

The signal sequence occupies residues 1-17; that stretch reads MKNAALCEALPLLATCS. Residue Ser-81 is the site of GPI-anchor amidated serine attachment. Residues 82–101 constitute a propeptide, removed in mature form; sequence FAKPSFSFFFFLLTSLLSPF.

The protein localises to the cell membrane. This chain is Long chronological lifespan protein 1 (LCL1), found in Saccharomyces cerevisiae (strain ATCC 204508 / S288c) (Baker's yeast).